Here is a 95-residue protein sequence, read N- to C-terminus: Pancreatic polypeptide prohormone (95 aa).

The signal sequence occupies residues 1 to 29 (MAAARLCLSLLLLSTCVALLLQPLLGAQG). Tyr-65 carries the tyrosine amide modification. Positions 89–95 (ELSPLDL) are excised as a propeptide.

It belongs to the NPY family.

The protein localises to the secreted. Its function is as follows. Hormone secreted by pancreatic cells that acts as a regulator of pancreatic and gastrointestinal functions probably by signaling through the G protein-coupled receptor NPY4R2. The sequence is that of Pancreatic polypeptide prohormone from Homo sapiens (Human).